Reading from the N-terminus, the 48-residue chain is Large ribosomal subunit protein bL34 (48 aa).

This sequence belongs to the bacterial ribosomal protein bL34 family.

This is Large ribosomal subunit protein bL34 from Gloeothece citriformis (strain PCC 7424) (Cyanothece sp. (strain PCC 7424)).